The chain runs to 185 residues: Photosystem I assembly protein Ycf4 (185 aa).

The next 2 helical transmembrane spans lie at 24-44 and 58-78; these read YIIG…SISS and ALLF…ANLL.

The protein belongs to the Ycf4 family.

Its subcellular location is the cellular thylakoid membrane. In terms of biological role, seems to be required for the assembly of the photosystem I complex. The polypeptide is Photosystem I assembly protein Ycf4 (Prochlorococcus marinus (strain MIT 9215)).